Reading from the N-terminus, the 209-residue chain is U1 small nuclear ribonucleoprotein C (209 aa).

A Matrin-type zinc finger spans residues 4 to 36 (HYCDYCDVFLTHDSASVRKAHNSGRNHLANVRD). The span at 72–87 (PQHLQAPPQGGFAPPM) shows a compositional bias: low complexity. Positions 72 to 209 (PQHLQAPPQG…RARMMGPGGR (138 aa)) are disordered. Composition is skewed to pro residues over residues 93–150 (GGFP…PFPP) and 159–191 (PGAPSFPPPPGGFNGPPPPSGQNSQGPPPPTNP).

It belongs to the U1 small nuclear ribonucleoprotein C family. U1 snRNP is composed of the 7 core Sm proteins B/B', D1, D2, D3, E, F and G that assemble in a heptameric protein ring on the Sm site of the small nuclear RNA to form the core snRNP, and at least 3 U1 snRNP-specific proteins U1-70K, U1-A and U1-C. U1-C interacts with U1 snRNA and the 5' splice-site region of the pre-mRNA.

It localises to the nucleus. In terms of biological role, component of the spliceosomal U1 snRNP, which is essential for recognition of the pre-mRNA 5' splice-site and the subsequent assembly of the spliceosome. U1-C is directly involved in initial 5' splice-site recognition for both constitutive and regulated alternative splicing. The interaction with the 5' splice-site seems to precede base-pairing between the pre-mRNA and the U1 snRNA. Stimulates commitment or early (E) complex formation by stabilizing the base pairing of the 5' end of the U1 snRNA and the 5' splice-site region. In Coprinopsis cinerea (strain Okayama-7 / 130 / ATCC MYA-4618 / FGSC 9003) (Inky cap fungus), this protein is U1 small nuclear ribonucleoprotein C.